A 157-amino-acid polypeptide reads, in one-letter code: Large ribosomal subunit protein eL24 (157 aa).

The segment at 94-157 is disordered; that stretch reads RNQKPEVRKA…ISAPRVGGKR (64 aa). Basic and acidic residues predominate over residues 96 to 117; it reads QKPEVRKAQREQAIRAAKEAKK. Positions 123–140 are enriched in low complexity; it reads KKPAAPSAKASTKTAQKP.

This sequence belongs to the eukaryotic ribosomal protein eL24 family. As to quaternary structure, component of the large ribosomal subunit.

The protein localises to the cytoplasm. Component of the large ribosomal subunit. The ribosome is a large ribonucleoprotein complex responsible for the synthesis of proteins in the cell. The sequence is that of Large ribosomal subunit protein eL24 (rpl24) from Pagrus major (Red sea bream).